A 440-amino-acid polypeptide reads, in one-letter code: Xylose isomerase (440 aa).

Catalysis depends on residues His101 and Asp104. Mg(2+) is bound by residues Glu232, Glu268, His271, Asp296, Asp307, Asp309, and Asp339.

This sequence belongs to the xylose isomerase family. As to quaternary structure, homotetramer. The cofactor is Mg(2+).

The protein localises to the cytoplasm. The catalysed reaction is alpha-D-xylose = alpha-D-xylulofuranose. This chain is Xylose isomerase, found in Escherichia coli O17:K52:H18 (strain UMN026 / ExPEC).